Reading from the N-terminus, the 1099-residue chain is Transmembrane protein 132C (1099 aa).

An N-terminal signal peptide occupies residues 1-31 (MRSEGAAPRRAARYGALSLVLATLLGQVTES). Residues 32–915 (RGVMDNIQRF…LMQTAHGLSD (884 aa)) lie on the Extracellular side of the membrane. Asn95 is a glycosylation site (N-linked (GlcNAc...) asparagine). The interval 237 to 260 (GDCTGGDTRKDNAIRPGKDGQEGR) is disordered. N-linked (GlcNAc...) asparagine glycosylation is found at Asn314 and Asn371. The segment at 801–872 (DADSSQTGEK…NNVGKSGRRD (72 aa)) is disordered. Residues 813–849 (EEIKNHASDRRQKIQDLERPGQDELYHGNFPGDREEG) are compositionally biased toward basic and acidic residues. Residues 916 to 936 (LEIGMYALLGVFCLAILVFLI) traverse the membrane as a helical segment. At 937–1099 (NCATFAFKYR…TYLEKFQDSV (163 aa)) the chain is on the cytoplasmic side. Residues 1002–1045 (NHLLLNGGSQKPTQSQVHRPPGSGGRQTREPRQEPANSPTSKMK) are disordered. Over residues 1008–1018 (GGSQKPTQSQV) the composition is skewed to polar residues.

The protein belongs to the TMEM132 family.

It localises to the membrane. The protein is Transmembrane protein 132C (Tmem132c) of Mus musculus (Mouse).